The sequence spans 329 residues: GTP 3',8-cyclase (329 aa).

Positions 1-229 (MNPVDYLRIS…TAFVQGNGPA (229 aa)) constitute a Radical SAM core domain. Arginine 8 lines the GTP pocket. Cysteine 15 and cysteine 19 together coordinate [4Fe-4S] cluster. Position 21 (tyrosine 21) interacts with S-adenosyl-L-methionine. Residue cysteine 22 coordinates [4Fe-4S] cluster. GTP is bound at residue arginine 60. Glycine 64 provides a ligand contact to S-adenosyl-L-methionine. Residue threonine 91 coordinates GTP. Serine 115 is an S-adenosyl-L-methionine binding site. Lysine 155 contributes to the GTP binding site. Methionine 189 lines the S-adenosyl-L-methionine pocket. 2 residues coordinate [4Fe-4S] cluster: cysteine 252 and cysteine 255. Residue 257 to 259 (RMR) participates in GTP binding. Cysteine 269 is a binding site for [4Fe-4S] cluster.

It belongs to the radical SAM superfamily. MoaA family. As to quaternary structure, monomer and homodimer. [4Fe-4S] cluster serves as cofactor.

The catalysed reaction is GTP + AH2 + S-adenosyl-L-methionine = (8S)-3',8-cyclo-7,8-dihydroguanosine 5'-triphosphate + 5'-deoxyadenosine + L-methionine + A + H(+). The protein operates within cofactor biosynthesis; molybdopterin biosynthesis. Its function is as follows. Catalyzes the cyclization of GTP to (8S)-3',8-cyclo-7,8-dihydroguanosine 5'-triphosphate. This Picosynechococcus sp. (strain ATCC 27264 / PCC 7002 / PR-6) (Agmenellum quadruplicatum) protein is GTP 3',8-cyclase.